Here is a 225-residue protein sequence, read N- to C-terminus: Ribonuclease 3 (225 aa).

Residues 5–127 (IEKLTRQLGY…IIGAVYLDSD (123 aa)) enclose the RNase III domain. A Mg(2+)-binding site is contributed by E40. D44 is an active-site residue. Mg(2+) is bound by residues D113 and E116. E116 is an active-site residue. The region spanning 154-224 (DPKTRLQEFL…AELALEQLTN (71 aa)) is the DRBM domain.

This sequence belongs to the ribonuclease III family. As to quaternary structure, homodimer. Requires Mg(2+) as cofactor.

It is found in the cytoplasm. It carries out the reaction Endonucleolytic cleavage to 5'-phosphomonoester.. Digests double-stranded RNA. Involved in the processing of primary rRNA transcript to yield the immediate precursors to the large and small rRNAs (23S and 16S). Processes some mRNAs, and tRNAs when they are encoded in the rRNA operon. Processes pre-crRNA and tracrRNA of type II CRISPR loci if present in the organism. The chain is Ribonuclease 3 from Vibrio vulnificus (strain CMCP6).